Here is a 788-residue protein sequence, read N- to C-terminus: MDEPSDDENSEPTPKKIKREWVKSYSNKAMEMMKKMGYENDKGLGKSNQGRLEPIIAVQQDGRRGFGLKLDTVQSSAGQWDPACEELEIPEPVLWLHNPGSRADAYSLDQLMGHLVTGEKKLTLDGETRYCDPAILHHILNAKTVFDDLNDNEKRRARSRCNPFETIRSSIFLNRAAVKMANIDSMCNFMFTNPRDPAGQTLVAPDELLYFTDMCAGPGGFSEYVLYRKSWEAKGFGFTLRGANDFKLEKFFAASPESFDTFYGVKEDGNIFDESNQDSLNEYIRMHTPQGVHFAMADGGFSVEGQKNIQEILSKQLYLCQFLTALKILRPNGSFVCKVFDLFTPFSVGLVYLMYKCFQQIAIIKPNSSRPANSERYLVCKYKRSDAETAGIVAYLNTVNLMLSDESQLDENDVLEIFNANELAEDEDFLRYIIDSNNAIGKKQIVGLRKIAAFAQNLELKETKQSEVRQECLKRWGLPDKLRQAPENKPTDRLLDELLADWANERSWLSLPATEMKGVASLNATIKNVADWYFVPVGREETNINACSLFLCKSRGNLLRYTEHKKWELVETAFEVQPRSIFFGQIVYEFYGEGRTIQRMAALHIIDGICLGGVDIRRRPYRERVSMCDKFARSLNKPYRKDRTFGALRSKPLFRLQDMGSFFANMRHYVLKDNSQRLGFALDDNKFFVPGGIMMFCELTNNYVSAHSRSRGQLYYFNVRNKESYYKDQIPRNKADEIFASFRFSFSCRLLWKWTDLRQVEELATEDNPKILFRSDFVKFIADKLGHS.

Residues 25 to 71 (YSNKAMEMMKKMGYENDKGLGKSNQGRLEPIIAVQQDGRRGFGLKLD) enclose the G-patch domain. Substrate is bound by residues 143–147 (KTVFD) and Arg-158. In terms of domain architecture, RrmJ-type SAM-dependent 2'-O-MTase spans 171 to 384 (IFLNRAAVKM…ERYLVCKYKR (214 aa)). Residue Asn-174 coordinates S-adenosyl-L-methionine. Residue Lys-179 is part of the active site. 215–221 (CAGPGGF) is an S-adenosyl-L-methionine binding site. Asp-298 is a catalytic residue. 308–310 (NIQ) contacts substrate. Residue Lys-338 is the Proton acceptor of the active site. Asn-373 contributes to the substrate binding site.

In terms of assembly, interacts (via C-terminus) with r2d2 (via C-terminus).

Its subcellular location is the nucleus. The protein resides in the cytoplasm. The enzyme catalyses a 5'-end (N(7)-methyl 5'-triphosphoguanosine)-ribonucleoside in mRNA + S-adenosyl-L-methionine = a 5'-end (N(7)-methyl 5'-triphosphoguanosine)-(2'-O-methyl-ribonucleoside) in mRNA + S-adenosyl-L-homocysteine + H(+). S-adenosyl-L-methionine-dependent methyltransferase that mediates mRNA cap1 2'-O-ribose methylation to the 5'-cap structure of mRNAs. Methylates the ribose of the first nucleotide of a m(7)GpppG-capped mRNA to produce m(7)GpppNmp (cap1). Positively regulates the Ago2-dependent small RNA pathway, with roles in both siRNA biogenesis and RISC assembly. Involved in facilitating conversion of pre-RISC into holo-RISC, possibly by promoting the unwinding of Ago2-bound siRNA duplexes and thus the retention of the guide strand in holo-RISC. The sequence is that of Cap-specific mRNA (nucleoside-2'-O-)-methyltransferase 1 from Drosophila melanogaster (Fruit fly).